The sequence spans 429 residues: Carboxypeptidase B (429 aa).

Residues 1–15 form the signal peptide; sequence MKFLLVLALCAVVYA. The Peptidase M14 domain maps to 121 to 423; sequence NYQELEVIDE…EGIVVGARRA (303 aa). His182 and Glu185 together coordinate Zn(2+). Substrate-binding positions include 182–185, Arg236, and 256–257; these read HARE and NR. Residues Cys250 and Cys273 are joined by a disulfide bond. Zn(2+) is bound at residue His309. Residues 310–311 and Tyr365 each bind substrate; that span reads SF. Glu387 acts as the Proton donor/acceptor in catalysis.

The protein belongs to the peptidase M14 family. Requires Zn(2+) as cofactor.

Its subcellular location is the secreted. The catalysed reaction is Preferential release of a C-terminal lysine or arginine amino acid.. Highly resistant to inhibition by potato carboxypeptidase inhibitor (PCI). Moderately inhibited by leech carboxypeptidase inhibitor (LCI) and tick carboxypeptidase inhibitor (TCI). Functionally, metalloprotease which cleaves a single amino acid from the C-terminal end of polypeptide chains. Shows a strong preference for peptides with a terminal lysine residue. This Helicoverpa zea (Corn earworm moth) protein is Carboxypeptidase B.